The primary structure comprises 129 residues: NADH-ubiquinone oxidoreductase chain 3 (129 aa).

3 consecutive transmembrane segments (helical) span residues 4-24, 48-68, and 82-102; these read FYMYLAPIVAGVLIGLNWLLA, AAFSVAFILVAILFLPFDLEI, and GLYGLIILIIFLMMLVIAFIL.

The protein belongs to the complex I subunit 3 family.

The protein resides in the mitochondrion membrane. The catalysed reaction is a ubiquinone + NADH + 5 H(+)(in) = a ubiquinol + NAD(+) + 4 H(+)(out). In terms of biological role, core subunit of the mitochondrial membrane respiratory chain NADH dehydrogenase (Complex I) that is believed to belong to the minimal assembly required for catalysis. Complex I functions in the transfer of electrons from NADH to the respiratory chain. The immediate electron acceptor for the enzyme is believed to be ubiquinone. This is NADH-ubiquinone oxidoreductase chain 3 (NAD3) from Candida albicans (strain SC5314 / ATCC MYA-2876) (Yeast).